The following is a 1199-amino-acid chain: DNA polymerase beta (1199 aa).

The protein belongs to the DNA polymerase type-B family.

It catalyses the reaction DNA(n) + a 2'-deoxyribonucleoside 5'-triphosphate = DNA(n+1) + diphosphate. DNA-directed DNA polymerase involved in viral DNA replication. This Ornithodoros (relapsing fever ticks) protein is DNA polymerase beta.